A 217-amino-acid polypeptide reads, in one-letter code: Glutathione S-transferase B (217 aa).

One can recognise a GST N-terminal domain in the interval 1 to 87 (PMTLGYWNIR…YIARKHNLCG (87 aa)). Glutathione-binding positions include 6-7 (YW), 45-49 (WLNEK), 58-59 (NL), and 71-72 (QS). The 119-residue stretch at 89–207 (TEEETIRMDI…KSSRFLPKPL (119 aa)) folds into the GST C-terminal domain. Tyrosine 115 serves as a coordination point for substrate.

The protein belongs to the GST superfamily. Mu family. In terms of assembly, homodimer.

It is found in the cytoplasm. It catalyses the reaction RX + glutathione = an S-substituted glutathione + a halide anion + H(+). The catalysed reaction is prostaglandin A2 + glutathione = prostaglandin A2-S-(R)-glutathione. The enzyme catalyses prostaglandin J2 + glutathione = prostaglandin J2-S-(R)-glutathione. It carries out the reaction prostaglandin J2 + glutathione = prostaglandin J2-S-(S)-glutathione. It catalyses the reaction prostaglandin A2 + glutathione = prostaglandin A2-S-(S)-glutathione. The catalysed reaction is 11(S)-hydroxy-14(S),15(S)-epoxy-(5Z,8Z,12E)-eicosatrienoate + glutathione = (11S,15S)-dihydroxy-14(R)-S-glutathionyl-(5Z,8Z,12E)-eicosatrienoate. Its function is as follows. Conjugation of reduced glutathione to a wide number of exogenous and endogenous hydrophobic electrophiles. Involved in the formation of glutathione conjugates of both prostaglandin A2 (PGA2) and prostaglandin J2 (PGJ2). Participates in the formation of novel hepoxilin regioisomers. This is Glutathione S-transferase B (GSTM1) from Cavia porcellus (Guinea pig).